Here is a 337-residue protein sequence, read N- to C-terminus: MRKSLITKWLFVSCIMVIAMVVIGGITRLTGAGLSIVEWRPVTGILPPFSFESWQAEFAKYKAFPEYNSVNYGMTLSEFKCIYLLEFIHRLLGRMTVLIYIVPLIYFYFKDVIKNCDMLPYIIALLLFCVQGFMGWYMVKSGLLNSPSVSHFRLAFHLIIAVIIYHILFYQLIKNRCDILLIPSQTDLKLPLIFSGIAITVIYVQIFLGALVAGLDAGLIYNSFPLMGDHCIPMEIKDNFFNLANLHDPVFIQFIHRLGSYSVFLVVVVLVICLLTIEHPKLNKIAYFLMIALLMQISTGIITLLYSVPIIIASIHQLFAIILLSIIIWCYFLINSS.

5 helical membrane-spanning segments follow: residues 6 to 26 (ITKWLFVSCIMVIAMVVIGGI), 87 to 107 (FIHRLLGRMTVLIYIVPLIYF), 119 to 139 (LPYIIALLLFCVQGFMGWYMV), 154 to 174 (LAFHLIIAVIIYHILFYQLIK), and 192 to 212 (LIFSGIAITVIYVQIFLGALV). Heme is bound at residue H256. Transmembrane regions (helical) follow at residues 258–278 (LGSYSVFLVVVVLVICLLTIE), 285–305 (IAYFLMIALLMQISTGIITLL), and 308–328 (VPIIIASIHQLFAIILLSIII). H316 serves as a coordination point for heme.

It belongs to the COX15/CtaA family. Type 2 subfamily. In terms of assembly, interacts with CtaB. The cofactor is heme b.

The protein resides in the cell membrane. It carries out the reaction Fe(II)-heme o + 2 A + H2O = Fe(II)-heme a + 2 AH2. The protein operates within porphyrin-containing compound metabolism; heme A biosynthesis; heme A from heme O: step 1/1. Functionally, catalyzes the conversion of heme O to heme A by two successive hydroxylations of the methyl group at C8. The first hydroxylation forms heme I, the second hydroxylation results in an unstable dihydroxymethyl group, which spontaneously dehydrates, resulting in the formyl group of heme A. This chain is Heme A synthase, found in Rickettsia akari (strain Hartford).